Consider the following 479-residue polypeptide: Muscarinic acetylcholine receptor M4 (479 aa).

Residues 1-30 are Extracellular-facing; that stretch reads MANFTPVNGSSANQSVRLVTTAHNHLETVE. N-linked (GlcNAc...) asparagine glycosylation is found at N8 and N13. Residues 31-53 traverse the membrane as a helical segment; the sequence is MVFIATVTGSLSLVTVVGNILVM. The Cytoplasmic portion of the chain corresponds to 54-67; that stretch reads LSIKVNRQLQTVNN. A helical transmembrane segment spans residues 68–88; sequence YFLFSLACADLIIGAFSMNLY. Over 89 to 105 the chain is Extracellular; the sequence is TLYIIKGYWPLGAVVCD. A disulfide bond links C104 and C184. The chain crosses the membrane as a helical span at residues 106–127; sequence LWLALDYVVSNASVMNLLIISF. The Cytoplasmic segment spans residues 128-147; sequence DRYFCVTKPLTYPARRTTKM. The chain crosses the membrane as a helical span at residues 148 to 170; it reads AGLMIAAAWVLSFVLWAPAILFW. The Extracellular segment spans residues 171-192; sequence QFVVGKRTVPDNQCFIQFLSNP. A helical membrane pass occupies residues 193 to 215; it reads AVTFGTAIAAFYLPVVIMTVLYI. Topologically, residues 216 to 401 are cytoplasmic; it reads HISLASRSRV…AARERKVTRT (186 aa). The segment at 271 to 334 is disordered; the sequence is LEEAPPPALP…APTLQPRTLN (64 aa). Residues 274–285 show a composition bias toward pro residues; sequence APPPALPPPPRP. Over residues 293–303 the composition is skewed to polar residues; that stretch reads NESSSGSATQN. Residues 310–333 show a composition bias toward low complexity; that stretch reads TELSTTEAATTPALPAPTLQPRTL. A helical transmembrane segment spans residues 402–422; the sequence is IFAILLAFILTWTPYNVMVLV. The Extracellular segment spans residues 423–436; that stretch reads NTFCQSCIPERVWS. The chain crosses the membrane as a helical span at residues 437–456; that stretch reads IGYWLCYVNSTINPACYALC. At 457-479 the chain is on the cytoplasmic side; it reads NATFKKTFRHLLLCQYRNIGTAR. T459, T463, and T477 each carry phosphothreonine.

This sequence belongs to the G-protein coupled receptor 1 family. Muscarinic acetylcholine receptor subfamily. CHRM4 sub-subfamily.

The protein resides in the cell membrane. The protein localises to the postsynaptic cell membrane. The muscarinic acetylcholine receptor mediates various cellular responses, including inhibition of adenylate cyclase, breakdown of phosphoinositides and modulation of potassium channels through the action of G proteins. Primary transducing effect is inhibition of adenylate cyclase. The protein is Muscarinic acetylcholine receptor M4 (Chrm4) of Mus musculus (Mouse).